The following is a 256-amino-acid chain: 5-keto-4-deoxy-D-glucarate aldolase (256 aa).

Residue histidine 50 is the Proton acceptor of the active site. Glutamine 151 lines the substrate pocket. Glutamate 153 contacts Mg(2+). Substrate contacts are provided by serine 178 and aspartate 179. Mg(2+) is bound at residue aspartate 179.

This sequence belongs to the HpcH/HpaI aldolase family. KDGluc aldolase subfamily. Homohexamer; trimer of dimers. The cofactor is Mg(2+).

It catalyses the reaction 5-dehydro-4-deoxy-D-glucarate = 2-hydroxy-3-oxopropanoate + pyruvate. The enzyme catalyses 2-dehydro-3-deoxy-D-glucarate = 2-hydroxy-3-oxopropanoate + pyruvate. Its pathway is carbohydrate acid metabolism; galactarate degradation; D-glycerate from galactarate: step 2/3. Its function is as follows. Catalyzes the reversible retro-aldol cleavage of both 5-keto-4-deoxy-D-glucarate and 2-keto-3-deoxy-D-glucarate to pyruvate and tartronic semialdehyde. This is 5-keto-4-deoxy-D-glucarate aldolase from Salmonella gallinarum (strain 287/91 / NCTC 13346).